The chain runs to 62 residues: Sperm protamine P1 (62 aa).

The tract at residues 1–62 (MARCRRHSRS…RYSRRGRRRY (62 aa)) is disordered.

This sequence belongs to the protamine P1 family. In terms of tissue distribution, testis.

Its subcellular location is the nucleus. It is found in the chromosome. In terms of biological role, protamines substitute for histones in the chromatin of sperm during the haploid phase of spermatogenesis. They compact sperm DNA into a highly condensed, stable and inactive complex. This Planigale maculata sinualis (Common planigale) protein is Sperm protamine P1 (PRM1).